Consider the following 92-residue polypeptide: UPF0358 protein Exig_1994 (92 aa).

This sequence belongs to the UPF0358 family.

This is UPF0358 protein Exig_1994 from Exiguobacterium sibiricum (strain DSM 17290 / CCUG 55495 / CIP 109462 / JCM 13490 / 255-15).